The primary structure comprises 395 residues: Ketoisovalerate oxidoreductase subunit VorA (395 aa).

In terms of assembly, heterotetramer of one alpha, one beta, one delta and one gamma chain.

The catalysed reaction is 3-methyl-2-oxobutanoate + 2 oxidized [2Fe-2S]-[ferredoxin] + CoA = 2-methylpropanoyl-CoA + 2 reduced [2Fe-2S]-[ferredoxin] + CO2 + H(+). This is Ketoisovalerate oxidoreductase subunit VorA (vorA) from Pyrococcus abyssi (strain GE5 / Orsay).